Here is a 295-residue protein sequence, read N- to C-terminus: Acetylglutamate kinase (295 aa).

Substrate-binding positions include 66-67 (GG), Arg-88, and Asn-193.

This sequence belongs to the acetylglutamate kinase family. ArgB subfamily.

Its subcellular location is the cytoplasm. It catalyses the reaction N-acetyl-L-glutamate + ATP = N-acetyl-L-glutamyl 5-phosphate + ADP. It functions in the pathway amino-acid biosynthesis; L-arginine biosynthesis; N(2)-acetyl-L-ornithine from L-glutamate: step 2/4. Its function is as follows. Catalyzes the ATP-dependent phosphorylation of N-acetyl-L-glutamate. The chain is Acetylglutamate kinase from Gluconobacter oxydans (strain 621H) (Gluconobacter suboxydans).